The chain runs to 509 residues: MNLLDPFMKMTDEQEKGLSGAPSPTMSEGSRGSPCPSGSGSDTENTRPQENTFPKGEPDLKKESEEDKFPVCIREAVSQVLKGYDWTLVPMPVRVNGSSKNKPHVKRPMNAFMVWAQAARRKLADQYPHLHNAELSKTLGKLWRLLNESEKRPFVEEAERLRVQHKKDHPDYKYQPRRRKSVKNGQAEAEEATEQTHISPNAIFKALQADSPHSSSGMSEVHSPGEHSGQSQGPPTPPTTPKTDVQPGKADLKREGRPLPEGGRQPPIDFRDVDIGELSSDVISNIETFDVNEFDQYLPPNGHPGVPATHGQVTYTGSYGISSTAATPAGAGHVWMSKQQAPPPPPHPPQQPPPVPQAPAQPQAALPQQPQAPPQQPQAHTLTTLSSEPGQSQRTHIKTEQLSPSHYSEQQQHSPQQIAYSPFNLPHYSPSYPPITRSQYDYTDHQNSGSYYSHARSQGSVLYSTFTYMNPAHGPMYTPIADTSGVPSIPQTHSPQHWEQPVYTQLTRP.

Disordered stretches follow at residues 1 to 66 and 160 to 271; these read MNLL…ESEE and RLRV…IDFR. Over residues 27–41 the composition is skewed to low complexity; that stretch reads SEGSRGSPCPSGSGS. Positions 42–52 are enriched in polar residues; the sequence is DTENTRPQENT. 2 stretches are compositionally biased toward basic and acidic residues: residues 56–66 and 160–174; these read GEPDLKKESEE and RLRV…DYKY. A dimerization (DIM) region spans residues 63-103; that stretch reads ESEEDKFPVCIREAVSQVLKGYDWTLVPMPVRVNGSSKNKP. A PQA region spans residues 63 to 103; that stretch reads ESEEDKFPVCIREAVSQVLKGYDWTLVPMPVRVNGSSKNKP. Ser-64 carries the phosphoserine modification. The HMG box DNA-binding region spans 105–173; sequence VKRPMNAFMV…QHKKDHPDYK (69 aa). The residue at position 211 (Ser-211) is a Phosphoserine. A transactivation domain (TAM) region spans residues 224–307; the sequence is PGEHSGQSQG…LPPNGHPGVP (84 aa). Short sequence motifs (9aaTAD) lie at residues 275-284 and 290-298; these read IGELSSDVIS and DVNEFDQYL. 2 disordered regions span residues 335–415 and 420–439; these read WMSK…QHSP and YSPF…TRSQ. A compositionally biased stretch (pro residues) spans 341–359; the sequence is APPPPPHPPQQPPPVPQAP. A compositionally biased stretch (low complexity) spans 360 to 369; sequence AQPQAALPQQ. Residues 380–415 are compositionally biased toward polar residues; it reads HTLTTLSSEPGQSQRTHIKTEQLSPSHYSEQQQHSP. Residues 394–509 form a transactivation domain (TAC) region; that stretch reads RTHIKTEQLS…QPVYTQLTRP (116 aa). Residue Lys-398 forms a Glycyl lysine isopeptide (Lys-Gly) (interchain with G-Cter in ubiquitin) linkage. The 9aaTAD 3 motif lies at 460–468; that stretch reads SVLYSTFTY. The disordered stretch occupies residues 479–509; sequence PIADTSGVPSIPQTHSPQHWEQPVYTQLTRP. Positions 485–509 are enriched in polar residues; it reads GVPSIPQTHSPQHWEQPVYTQLTRP.

Homodimer; homodimerization is required for activity. Interacts (via C-terminus) with ZNF219; forming a complex that binds to the COL2A1 promoter and activates COL2A1 expression. Interacts with DDRGK1. Interacts with EP300/p300. Interacts with beta-catenin (CTNNB1); inhibiting CTNNB1 activity by competing with the binding sites of TCF/LEF within CTNNB1. Acetylated; acetylation impairs nuclear localization and ability to transactivate expression of target genes. Deacetylated by SIRT1. In terms of processing, phosphorylation at Ser-64 and Ser-211 by PKA increases transcriptional activity and may help delay chondrocyte maturation downstream of PTHLH/PTHrP signaling. Phosphorylation at either Ser-64 or Ser-211 is required for sumoylation, but phosphorylation is not dependent on sumoylation. Phosphorylated on tyrosine residues; tyrosine dephosphorylation by PTPN11/SHP2 blocks SOX9 phosphorylation by PKA and subsequent SUMOylation. Post-translationally, sumoylated; phosphorylation at either Ser-64 or Ser-211 is required for sumoylation. Sumoylation is induced by BMP signaling pathway. Ubiquitinated; ubiquitination leads to proteasomal degradation and is negatively regulated by DDRGK1.

It localises to the nucleus. Functionally, transcription factor that plays a key role in chondrocytes differentiation and skeletal development. Specifically binds the 5'-ACAAAG-3' DNA motif present in enhancers and super-enhancers and promotes expression of genes important for chondrogenesis, including cartilage matrix protein-coding genes COL2A1, COL4A2, COL9A1, COL11A2 and ACAN, SOX5 and SOX6. Also binds to some promoter regions. Plays a central role in successive steps of chondrocyte differentiation. Absolutely required for precartilaginous condensation, the first step in chondrogenesis during which skeletal progenitors differentiate into prechondrocytes. Together with SOX5 and SOX6, required for overt chondrogenesis when condensed prechondrocytes differentiate into early stage chondrocytes, the second step in chondrogenesis. Later, required to direct hypertrophic maturation and block osteoblast differentiation of growth plate chondrocytes: maintains chondrocyte columnar proliferation, delays prehypertrophy and then prevents osteoblastic differentiation of chondrocytes by lowering beta-catenin (CTNNB1) signaling and RUNX2 expression. Also required for chondrocyte hypertrophy, both indirectly, by keeping the lineage fate of chondrocytes, and directly, by remaining present in upper hypertrophic cells and transactivating COL10A1 along with MEF2C. Low lipid levels are the main nutritional determinant for chondrogenic commitment of skeletal progenitor cells: when lipids levels are low, FOXO (FOXO1 and FOXO3) transcription factors promote expression of SOX9, which induces chondrogenic commitment and suppresses fatty acid oxidation. Mechanistically, helps, but is not required, to remove epigenetic signatures of transcriptional repression and deposit active promoter and enhancer marks at chondrocyte-specific genes. Acts in cooperation with the Hedgehog pathway-dependent GLI (GLI1 and GLI3) transcription factors. In addition to cartilage development, also acts as a regulator of proliferation and differentiation in epithelial stem/progenitor cells: involved in the lung epithelium during branching morphogenesis, by balancing proliferation and differentiation and regulating the extracellular matrix. Controls epithelial branching during kidney development. This Sus scrofa (Pig) protein is Transcription factor SOX-9 (SOX9).